We begin with the raw amino-acid sequence, 380 residues long: Probable tRNA-splicing endonuclease subunit sen2 (380 aa).

Catalysis depends on residues Y281, H289, and K325.

Belongs to the tRNA-intron endonuclease family. As to quaternary structure, heterotetramer composed of sen2, sen15, sen34 and sen54. Interacts directly with sen54.

The catalysed reaction is pretRNA = a 3'-half-tRNA molecule with a 5'-OH end + a 5'-half-tRNA molecule with a 2',3'-cyclic phosphate end + an intron with a 2',3'-cyclic phosphate and a 5'-hydroxyl terminus.. In terms of biological role, constitutes one of the two catalytic subunit of the tRNA-splicing endonuclease complex, a complex responsible for identification and cleavage of the splice sites in pre-tRNA. It cleaves pre-tRNA at the 5'- and 3'-splice sites to release the intron. The products are an intron and two tRNA half-molecules bearing 2',3'-cyclic phosphate and 5'-OH termini. There are no conserved sequences at the splice sites, but the intron is invariably located at the same site in the gene, placing the splice sites an invariant distance from the constant structural features of the tRNA body. This subunit may anchor the endonuclease complex to the nuclear membrane. Probably carries the active site for 5'-splice site cleavage. The sequence is that of Probable tRNA-splicing endonuclease subunit sen2 (sen2) from Schizosaccharomyces pombe (strain 972 / ATCC 24843) (Fission yeast).